Consider the following 139-residue polypeptide: Putative pre-16S rRNA nuclease (139 aa).

This sequence belongs to the YqgF nuclease family.

The protein localises to the cytoplasm. Its function is as follows. Could be a nuclease involved in processing of the 5'-end of pre-16S rRNA. This chain is Putative pre-16S rRNA nuclease, found in Haemophilus influenzae (strain PittEE).